The chain runs to 204 residues: MTQEVAPPAAAQDDAHGTAEHIAEGVAAETAEHAKGGLPQLNPDTYPTQIFWLAVTFGLLLFLMSKVALPRVAEVLEARQEKIADDLDRAGALKAEADAVIENYERELAEARAKAQKVLSDATLAAESETTQRLGELAADLAERARAAEARIEQARRAALGNIRGVAAETAVAAAAKLAGLDLDPATAEAAVEEALNRVRQEVV.

The chain crosses the membrane as a helical span at residues 50-70 (IFWLAVTFGLLLFLMSKVALP).

It belongs to the ATPase B chain family. As to quaternary structure, F-type ATPases have 2 components, F(1) - the catalytic core - and F(0) - the membrane proton channel. F(1) has five subunits: alpha(3), beta(3), gamma(1), delta(1), epsilon(1). F(0) has three main subunits: a(1), b(2) and c(10-14). The alpha and beta chains form an alternating ring which encloses part of the gamma chain. F(1) is attached to F(0) by a central stalk formed by the gamma and epsilon chains, while a peripheral stalk is formed by the delta and b chains.

The protein resides in the cell inner membrane. In terms of biological role, f(1)F(0) ATP synthase produces ATP from ADP in the presence of a proton or sodium gradient. F-type ATPases consist of two structural domains, F(1) containing the extramembraneous catalytic core and F(0) containing the membrane proton channel, linked together by a central stalk and a peripheral stalk. During catalysis, ATP synthesis in the catalytic domain of F(1) is coupled via a rotary mechanism of the central stalk subunits to proton translocation. Its function is as follows. Component of the F(0) channel, it forms part of the peripheral stalk, linking F(1) to F(0). The b'-subunit is a diverged and duplicated form of b found in plants and photosynthetic bacteria. The chain is ATP synthase subunit b 2 (atpF2) from Rhodospirillum centenum (strain ATCC 51521 / SW).